A 460-amino-acid chain; its full sequence is Cysteine--tRNA ligase (460 aa).

Cys28 provides a ligand contact to Zn(2+). Positions Met30 to His40 match the 'HIGH' region motif. Residues Cys209, His234, and Glu238 each contribute to the Zn(2+) site. The 'KMSKS' region motif lies at Lys266–Ser270. Lys269 lines the ATP pocket.

The protein belongs to the class-I aminoacyl-tRNA synthetase family. As to quaternary structure, monomer. Requires Zn(2+) as cofactor.

The protein resides in the cytoplasm. It catalyses the reaction tRNA(Cys) + L-cysteine + ATP = L-cysteinyl-tRNA(Cys) + AMP + diphosphate. In Pseudomonas savastanoi pv. phaseolicola (strain 1448A / Race 6) (Pseudomonas syringae pv. phaseolicola (strain 1448A / Race 6)), this protein is Cysteine--tRNA ligase.